Consider the following 116-residue polypeptide: Large ribosomal subunit protein bL17 (116 aa).

This sequence belongs to the bacterial ribosomal protein bL17 family. In terms of assembly, part of the 50S ribosomal subunit. Contacts protein L32.

This Fusobacterium nucleatum subsp. nucleatum (strain ATCC 25586 / DSM 15643 / BCRC 10681 / CIP 101130 / JCM 8532 / KCTC 2640 / LMG 13131 / VPI 4355) protein is Large ribosomal subunit protein bL17.